A 128-amino-acid polypeptide reads, in one-letter code: Crossover junction endodeoxyribonuclease Hjc (128 aa).

Position 10 (glutamate 10) interacts with Mg(2+). Residue serine 30 is part of the active site. Residues aspartate 34 and glutamate 47 each coordinate Mg(2+).

It belongs to the Holliday junction resolvase Hjc family. As to quaternary structure, homodimer. It depends on Mg(2+) as a cofactor.

It catalyses the reaction Endonucleolytic cleavage at a junction such as a reciprocal single-stranded crossover between two homologous DNA duplexes (Holliday junction).. Its function is as follows. A structure-specific endonuclease that resolves Holliday junction (HJ) intermediates during genetic recombination. Cleaves 4-way DNA junctions introducing paired nicks in opposing strands, leaving a 5'-terminal phosphate and a 3'-terminal hydroxyl group that are subsequently ligated to produce recombinant products. In Thermococcus kodakarensis (strain ATCC BAA-918 / JCM 12380 / KOD1) (Pyrococcus kodakaraensis (strain KOD1)), this protein is Crossover junction endodeoxyribonuclease Hjc.